Reading from the N-terminus, the 80-residue chain is Exodeoxyribonuclease 7 small subunit (80 aa).

Belongs to the XseB family. In terms of assembly, heterooligomer composed of large and small subunits.

It localises to the cytoplasm. It catalyses the reaction Exonucleolytic cleavage in either 5'- to 3'- or 3'- to 5'-direction to yield nucleoside 5'-phosphates.. In terms of biological role, bidirectionally degrades single-stranded DNA into large acid-insoluble oligonucleotides, which are then degraded further into small acid-soluble oligonucleotides. In Enterobacter sp. (strain 638), this protein is Exodeoxyribonuclease 7 small subunit.